A 57-amino-acid chain; its full sequence is Delta-elapitoxin-Cb1a (57 aa).

Disulfide bonds link Cys3/Cys22, Cys15/Cys36, Cys40/Cys49, and Cys50/Cys55.

It belongs to the three-finger toxin family. Short-chain subfamily. In terms of tissue distribution, expressed by the venom gland.

The protein resides in the secreted. This toxin shifts the voltage-dependence of Nav1.4/SCN4A activation to more hyperpolarised potentials, inhibits inactivation, and produces large ramp currents, consistent with its profound effects on contractile force in an isolated skeletal muscle preparation. This toxin produces large muscle contractions and fasciculations in the indirectly stimulated chick biventer cervicis nerve-muscle assay, which are significantly inhibited by the addition of the sodium channel antagonist tetrodotoxin. The chain is Delta-elapitoxin-Cb1a from Calliophis bivirgatus (Blue Malaysian coral snake).